Here is a 121-residue protein sequence, read N- to C-terminus: Large ribosomal subunit protein uL18 (121 aa).

It belongs to the universal ribosomal protein uL18 family. In terms of assembly, part of the 50S ribosomal subunit; part of the 5S rRNA/L5/L18/L25 subcomplex. Contacts the 5S and 23S rRNAs.

In terms of biological role, this is one of the proteins that bind and probably mediate the attachment of the 5S RNA into the large ribosomal subunit, where it forms part of the central protuberance. The chain is Large ribosomal subunit protein uL18 from Moorella thermoacetica (strain ATCC 39073 / JCM 9320).